The chain runs to 301 residues: Acetyl-coenzyme A carboxylase carboxyl transferase subunit beta (301 aa).

The CoA carboxyltransferase N-terminal domain maps to 23-292 (VWTKCDSCGQ…PSPDEPRESV (270 aa)). Cys-27, Cys-30, Cys-46, and Cys-49 together coordinate Zn(2+). A C4-type zinc finger spans residues 27-49 (CDSCGQVLYRAELERNLEVCPKC). Residues 280-301 (LPAPSPDEPRESVVVPDQEPEA) form a disordered region.

The protein belongs to the AccD/PCCB family. As to quaternary structure, acetyl-CoA carboxylase is a heterohexamer composed of biotin carboxyl carrier protein (AccB), biotin carboxylase (AccC) and two subunits each of ACCase subunit alpha (AccA) and ACCase subunit beta (AccD). The cofactor is Zn(2+).

Its subcellular location is the cytoplasm. It carries out the reaction N(6)-carboxybiotinyl-L-lysyl-[protein] + acetyl-CoA = N(6)-biotinyl-L-lysyl-[protein] + malonyl-CoA. The protein operates within lipid metabolism; malonyl-CoA biosynthesis; malonyl-CoA from acetyl-CoA: step 1/1. Component of the acetyl coenzyme A carboxylase (ACC) complex. Biotin carboxylase (BC) catalyzes the carboxylation of biotin on its carrier protein (BCCP) and then the CO(2) group is transferred by the transcarboxylase to acetyl-CoA to form malonyl-CoA. The sequence is that of Acetyl-coenzyme A carboxylase carboxyl transferase subunit beta from Enterobacter sp. (strain 638).